Here is a 182-residue protein sequence, read N- to C-terminus: ATP-dependent protease subunit HslV (182 aa).

Residue Thr7 is part of the active site. Na(+)-binding residues include Ala166, Cys169, and Thr172.

Belongs to the peptidase T1B family. HslV subfamily. As to quaternary structure, a double ring-shaped homohexamer of HslV is capped on each side by a ring-shaped HslU homohexamer. The assembly of the HslU/HslV complex is dependent on binding of ATP.

The protein resides in the cytoplasm. The catalysed reaction is ATP-dependent cleavage of peptide bonds with broad specificity.. Allosterically activated by HslU binding. Its function is as follows. Protease subunit of a proteasome-like degradation complex believed to be a general protein degrading machinery. In Albidiferax ferrireducens (strain ATCC BAA-621 / DSM 15236 / T118) (Rhodoferax ferrireducens), this protein is ATP-dependent protease subunit HslV.